The sequence spans 506 residues: Procardosin-B (506 aa).

A signal peptide spans 1–24; it reads MGTPIKASLLALFLFFLLSPTAFS. A propeptide spanning residues 25–70 is cleaved from the precursor; sequence VSNGGLLRVGLKKRKVDRLDQLRAHGVHMLGNARKDFGFRRTLSDS. A Peptidase A1 domain is found at 85–503; the sequence is YYGEIGIGTP…DYGKLRVGFA (419 aa). Aspartate 103 is an active-site residue. Cysteines 116 and 122 form a disulfide. N-linked (GlcNAc...) asparagine glycans are attached at residues asparagine 139 and asparagine 252. Cysteines 281 and 285 form a disulfide. Residue aspartate 290 is part of the active site. Positions 315–417 constitute a Saposin B-type domain; it reads VLNQQCKTLV…NEVCDQLPTS (103 aa). Disulfide bonds link cysteine 320/cysteine 411, cysteine 345/cysteine 383, cysteine 351/cysteine 380, and cysteine 425/cysteine 462. An N-linked (GlcNAc...) asparagine glycan is attached at asparagine 397.

Belongs to the peptidase A1 family. As to quaternary structure, heterodimer of a light chain and a heavy chain. An intermediate form is produced first, and undergoes proteolytic processing to remove the internal plant-specific insert (PSI) and the propeptide. In terms of tissue distribution, detected in pistils, but not in seeds, bracts, midribs, roots, leaves or stamen extracts. Detected in seeds. In stigmas and styles, detected in the transmitting tissue and in contiguous subepidermal layers at the longitudenal grooves of the stigma (at protein level).

Its subcellular location is the microsome membrane. It is found in the protein storage vacuole. It localises to the secreted. The protein resides in the cell wall. The protein localises to the extracellular space. Its subcellular location is the extracellular matrix. Inhibited by the specific aspartic proteinase inhibitors diazoacetyl-noleucine methyl ester and pepstatin. Aspartic protease. Cleaves alpha-lactalbumin but not beta-lactoglobulin. This chain is Procardosin-B, found in Cynara cardunculus (Cardoon).